We begin with the raw amino-acid sequence, 451 residues long: Chromosomal replication initiator protein DnaA (451 aa).

Positions 1-72 are domain I, interacts with DnaA modulators; sequence MQSIEDIWQE…ANILQEITGR (72 aa). The tract at residues 72-108 is domain II; that stretch reads RLFDVRFIDGEQEENFEYTVIKPNPALDEDGIEIGKH. Residues 109–325 are domain III, AAA+ region; the sequence is MLNPRYVFDT…GALIRVVAYS (217 aa). Glycine 153, glycine 155, lysine 156, and threonine 157 together coordinate ATP. The interval 326–451 is domain IV, binds dsDNA; it reads SLVNKDITAG…KNLRKSQNMF (126 aa).

The protein belongs to the DnaA family. As to quaternary structure, oligomerizes as a right-handed, spiral filament on DNA at oriC.

The protein localises to the cytoplasm. Its function is as follows. Plays an essential role in the initiation and regulation of chromosomal replication. ATP-DnaA binds to the origin of replication (oriC) to initiate formation of the DNA replication initiation complex once per cell cycle. Binds the DnaA box (a 9 base pair repeat at the origin) and separates the double-stranded (ds)DNA. Forms a right-handed helical filament on oriC DNA; dsDNA binds to the exterior of the filament while single-stranded (ss)DNA is stabiized in the filament's interior. The ATP-DnaA-oriC complex binds and stabilizes one strand of the AT-rich DNA unwinding element (DUE), permitting loading of DNA polymerase. After initiation quickly degrades to an ADP-DnaA complex that is not apt for DNA replication. Binds acidic phospholipids. This Listeria welshimeri serovar 6b (strain ATCC 35897 / DSM 20650 / CCUG 15529 / CIP 8149 / NCTC 11857 / SLCC 5334 / V8) protein is Chromosomal replication initiator protein DnaA.